We begin with the raw amino-acid sequence, 601 residues long: Elongation factor 4 (601 aa).

The tr-type G domain maps to 5–187 (ENIRNFCIVA…AIITTFPPPK (183 aa)). GTP is bound by residues 17-22 (DHGKST) and 134-137 (NKID).

The protein belongs to the TRAFAC class translation factor GTPase superfamily. Classic translation factor GTPase family. LepA subfamily.

The protein localises to the cell inner membrane. The catalysed reaction is GTP + H2O = GDP + phosphate + H(+). In terms of biological role, required for accurate and efficient protein synthesis under certain stress conditions. May act as a fidelity factor of the translation reaction, by catalyzing a one-codon backward translocation of tRNAs on improperly translocated ribosomes. Back-translocation proceeds from a post-translocation (POST) complex to a pre-translocation (PRE) complex, thus giving elongation factor G a second chance to translocate the tRNAs correctly. Binds to ribosomes in a GTP-dependent manner. The protein is Elongation factor 4 of Treponema denticola (strain ATCC 35405 / DSM 14222 / CIP 103919 / JCM 8153 / KCTC 15104).